Consider the following 128-residue polypeptide: AECKVTVDSTDQMSFNTKAIEIDKSCKTFTVELTHSGSLPKNVMGHNWVLSSAADMPGIASDGMAAGIDKNYLKEGDIRVIAHTKIIGAGEKDSVTFDVSKLAAGTDYAFFCSFPGHISMMKGTVTVK.

The region spanning 1-128 (AECKVTVDST…SMMKGTVTVK (128 aa)) is the Plastocyanin-like domain. A disulfide bond links Cys3 and Cys26. The Cu cation site is built by His46, Cys112, His117, and Met121.

Its subcellular location is the periplasm. Transfers electrons from cytochrome c551 to cytochrome oxidase. The chain is Azurin from Pseudomonas fluorescens biotype A.